A 155-amino-acid polypeptide reads, in one-letter code: Small ribosomal subunit protein uS7 (155 aa).

This sequence belongs to the universal ribosomal protein uS7 family. As to quaternary structure, part of the 30S ribosomal subunit. Contacts proteins S9 and S11.

One of the primary rRNA binding proteins, it binds directly to 16S rRNA where it nucleates assembly of the head domain of the 30S subunit. Is located at the subunit interface close to the decoding center, probably blocks exit of the E-site tRNA. The polypeptide is Small ribosomal subunit protein uS7 (Mycoplasma pneumoniae (strain ATCC 29342 / M129 / Subtype 1) (Mycoplasmoides pneumoniae)).